The primary structure comprises 183 residues: Gamma-crystallin N (183 aa).

4 Beta/gamma crystallin 'Greek key' domains span residues 6-46 (GKII…RVET), 47-89 (GAWI…KPVR), 95-136 (YRLE…KVYG), and 138-180 (GAWV…RRVV).

Belongs to the beta/gamma-crystallin family. In terms of assembly, monomer.

In terms of biological role, crystallins are the dominant structural components of the vertebrate eye lens. The polypeptide is Gamma-crystallin N (crygn) (Xenopus tropicalis (Western clawed frog)).